The sequence spans 466 residues: Acetylornithine aminotransferase, mitochondrial (466 aa).

At lysine 308 the chain carries N6-(pyridoxal phosphate)lysine.

It belongs to the class-III pyridoxal-phosphate-dependent aminotransferase family. The cofactor is pyridoxal 5'-phosphate.

It localises to the mitochondrion matrix. The catalysed reaction is N(2)-acetyl-L-ornithine + 2-oxoglutarate = N-acetyl-L-glutamate 5-semialdehyde + L-glutamate. It participates in amino-acid biosynthesis; L-arginine biosynthesis; N(2)-acetyl-L-ornithine from L-glutamate: step 4/4. This Debaryomyces hansenii (strain ATCC 36239 / CBS 767 / BCRC 21394 / JCM 1990 / NBRC 0083 / IGC 2968) (Yeast) protein is Acetylornithine aminotransferase, mitochondrial (ARG8).